The chain runs to 22 residues: Myofibril-bound serine protease (22 aa).

This sequence belongs to the peptidase S1 family. In terms of tissue distribution, detected in muscle (at protein level).

Its subcellular location is the cytoplasm. Inhibited by the serine protease inhibitors, antipain, aprotinin, DFP, leupeptin, STI and TLCK, and by the cysteine proteinase inhibitors DTNB and to a lesser extent E-64. Not inhibited by the metalloproteinase inhibitor EDTA. In terms of biological role, serine protease that selectively cleaves Arg-|-Xaa bonds. This Cyprinus carpio (Common carp) protein is Myofibril-bound serine protease.